A 109-amino-acid polypeptide reads, in one-letter code: uncharacterized protein (109 aa).

A run of 2 helical transmembrane segments spans residues Thr18–Leu38 and Ala48–Leu68.

Its subcellular location is the cell membrane. This is an uncharacterized protein from Mycobacterium tuberculosis (strain CDC 1551 / Oshkosh).